The following is a 169-amino-acid chain: Peptide methionine sulfoxide reductase MsrA (169 aa).

The active site involves Cys-10.

Belongs to the MsrA Met sulfoxide reductase family.

The catalysed reaction is L-methionyl-[protein] + [thioredoxin]-disulfide + H2O = L-methionyl-(S)-S-oxide-[protein] + [thioredoxin]-dithiol. It catalyses the reaction [thioredoxin]-disulfide + L-methionine + H2O = L-methionine (S)-S-oxide + [thioredoxin]-dithiol. Its function is as follows. Has an important function as a repair enzyme for proteins that have been inactivated by oxidation. Catalyzes the reversible oxidation-reduction of methionine sulfoxide in proteins to methionine. The protein is Peptide methionine sulfoxide reductase MsrA of Streptococcus pyogenes serotype M1.